We begin with the raw amino-acid sequence, 345 residues long: ATP-dependent (S)-NAD(P)H-hydrate dehydratase (345 aa).

The region spanning 9 to 332 (ILSLARSMIP…DMVGEVYEEV (324 aa)) is the YjeF C-terminal domain. (6S)-NADPHX-binding positions include Gly-113 and 170 to 176 (NVMEFKR). ATP-binding positions include 208–212 (KGPSD) and 241–250 (GGLKRVGGQG). Residue Asp-251 coordinates (6S)-NADPHX.

It belongs to the NnrD/CARKD family. Mg(2+) serves as cofactor.

The protein resides in the cytoplasm. It carries out the reaction (6S)-NADHX + ATP = ADP + phosphate + NADH + H(+). It catalyses the reaction (6S)-NADPHX + ATP = ADP + phosphate + NADPH + H(+). Functionally, catalyzes the dehydration of the S-form of NAD(P)HX at the expense of ATP, which is converted to ADP. Together with NAD(P)HX epimerase, which catalyzes the epimerization of the S- and R-forms, the enzyme allows the repair of both epimers of NAD(P)HX, a damaged form of NAD(P)H that is a result of enzymatic or heat-dependent hydration. This Cryptococcus neoformans var. neoformans serotype D (strain JEC21 / ATCC MYA-565) (Filobasidiella neoformans) protein is ATP-dependent (S)-NAD(P)H-hydrate dehydratase.